Consider the following 132-residue polypeptide: Small ribosomal subunit protein uS8 (132 aa).

The protein belongs to the universal ribosomal protein uS8 family. Part of the 30S ribosomal subunit. Contacts proteins S5 and S12.

One of the primary rRNA binding proteins, it binds directly to 16S rRNA central domain where it helps coordinate assembly of the platform of the 30S subunit. In Paramagnetospirillum magneticum (strain ATCC 700264 / AMB-1) (Magnetospirillum magneticum), this protein is Small ribosomal subunit protein uS8.